A 759-amino-acid polypeptide reads, in one-letter code: Arylphorin subunit C223 (759 aa).

An N-terminal signal peptide occupies residues 1–15; the sequence is MKIAIVLLAIVGLAA.

Belongs to the hemocyanin family. In terms of assembly, heterohexamer. As to expression, fat body.

The protein resides in the secreted. It is found in the extracellular space. Arylphorin is a larval storage protein (LSP) which may serve as a storage protein used primarily as a source of aromatic amino acids for protein synthesis during metamorphosis. It is a constituent of the sclerotizing system of the cuticle, and serves as a carrier for ecdysteroid hormone. This is Arylphorin subunit C223 from Calliphora vicina (Blue blowfly).